The chain runs to 351 residues: sn-glycerol-3-phosphate import ATP-binding protein UgpC (351 aa).

Residues Ile-4 to Ile-234 form the ABC transporter domain. Residue Gly-36 to Ser-43 coordinates ATP.

It belongs to the ABC transporter superfamily. sn-glycerol-3-phosphate importer (TC 3.A.1.1.3) family. The complex is composed of two ATP-binding proteins (UgpC), two transmembrane proteins (UgpA and UgpE) and a solute-binding protein (UgpB).

The protein resides in the cell inner membrane. The catalysed reaction is sn-glycerol 3-phosphate(out) + ATP + H2O = sn-glycerol 3-phosphate(in) + ADP + phosphate + H(+). Its function is as follows. Part of the ABC transporter complex UgpBAEC involved in sn-glycerol-3-phosphate (G3P) import. Responsible for energy coupling to the transport system. This is sn-glycerol-3-phosphate import ATP-binding protein UgpC from Ruegeria pomeroyi (strain ATCC 700808 / DSM 15171 / DSS-3) (Silicibacter pomeroyi).